Here is a 319-residue protein sequence, read N- to C-terminus: Peroxidase 62 (319 aa).

Positions 1–22 are cleaved as a signal peptide; the sequence is MGLVRSFALVIVFLSCLIAVYG. Cystine bridges form between C34–C110, C67–C72, C116–C315, and C195–C226. H65 (proton acceptor) is an active-site residue. Ca(2+) is bound by residues D66, V69, G71, D73, and S75. Residue P157 participates in substrate binding. H188 contributes to the heme b binding site. T189 is a Ca(2+) binding site. N204 carries an N-linked (GlcNAc...) asparagine glycan. Residues D239, S242, and D247 each coordinate Ca(2+). A glycan (N-linked (GlcNAc...) asparagine) is linked at N253.

This sequence belongs to the peroxidase family. Classical plant (class III) peroxidase subfamily. It depends on heme b as a cofactor. Requires Ca(2+) as cofactor. In terms of tissue distribution, mainly expressed in roots.

Its subcellular location is the secreted. The enzyme catalyses 2 a phenolic donor + H2O2 = 2 a phenolic radical donor + 2 H2O. In terms of biological role, removal of H(2)O(2), oxidation of toxic reductants, biosynthesis and degradation of lignin, suberization, auxin catabolism, response to environmental stresses such as wounding, pathogen attack and oxidative stress. These functions might be dependent on each isozyme/isoform in each plant tissue. In Arabidopsis thaliana (Mouse-ear cress), this protein is Peroxidase 62 (PER62).